A 738-amino-acid polypeptide reads, in one-letter code: Ribosomal RNA large subunit methyltransferase K/L (738 aa).

The region spanning 46 to 157 (TAYRVCLWSR…ADQAVIGLDL (112 aa)) is the THUMP domain.

This sequence belongs to the methyltransferase superfamily. RlmKL family.

The protein localises to the cytoplasm. It carries out the reaction guanosine(2445) in 23S rRNA + S-adenosyl-L-methionine = N(2)-methylguanosine(2445) in 23S rRNA + S-adenosyl-L-homocysteine + H(+). The catalysed reaction is guanosine(2069) in 23S rRNA + S-adenosyl-L-methionine = N(2)-methylguanosine(2069) in 23S rRNA + S-adenosyl-L-homocysteine + H(+). In terms of biological role, specifically methylates the guanine in position 2445 (m2G2445) and the guanine in position 2069 (m7G2069) of 23S rRNA. The protein is Ribosomal RNA large subunit methyltransferase K/L of Methylococcus capsulatus (strain ATCC 33009 / NCIMB 11132 / Bath).